We begin with the raw amino-acid sequence, 159 residues long: Transcription elongation factor GreA (159 aa).

Residues 2–77 adopt a coiled-coil conformation; the sequence is EENKEFLLTQ…LENMVRKAVI (76 aa).

The protein belongs to the GreA/GreB family.

Functionally, necessary for efficient RNA polymerase transcription elongation past template-encoded arresting sites. The arresting sites in DNA have the property of trapping a certain fraction of elongating RNA polymerases that pass through, resulting in locked ternary complexes. Cleavage of the nascent transcript by cleavage factors such as GreA or GreB allows the resumption of elongation from the new 3'terminus. GreA releases sequences of 2 to 3 nucleotides. The sequence is that of Transcription elongation factor GreA from Clostridioides difficile (strain 630) (Peptoclostridium difficile).